Here is a 338-residue protein sequence, read N- to C-terminus: Ketol-acid reductoisomerase (NADP(+)) (338 aa).

The KARI N-terminal Rossmann domain maps to 1–181 (MKVFYDKDCD…GGGRTGIIET (181 aa)). Residues 24 to 27 (YGSQ), arginine 47, serine 50, threonine 52, and 82 to 85 (DEFQ) each bind NADP(+). Residue histidine 107 is part of the active site. Position 133 (glycine 133) interacts with NADP(+). One can recognise a KARI C-terminal knotted domain in the interval 182 to 327 (TFKDETETDL…EQLRSMMPWI (146 aa)). The Mg(2+) site is built by aspartate 190, glutamate 194, glutamate 226, and glutamate 230. Serine 251 contacts substrate.

The protein belongs to the ketol-acid reductoisomerase family. It depends on Mg(2+) as a cofactor.

It catalyses the reaction (2R)-2,3-dihydroxy-3-methylbutanoate + NADP(+) = (2S)-2-acetolactate + NADPH + H(+). The enzyme catalyses (2R,3R)-2,3-dihydroxy-3-methylpentanoate + NADP(+) = (S)-2-ethyl-2-hydroxy-3-oxobutanoate + NADPH + H(+). Its pathway is amino-acid biosynthesis; L-isoleucine biosynthesis; L-isoleucine from 2-oxobutanoate: step 2/4. The protein operates within amino-acid biosynthesis; L-valine biosynthesis; L-valine from pyruvate: step 2/4. Functionally, involved in the biosynthesis of branched-chain amino acids (BCAA). Catalyzes an alkyl-migration followed by a ketol-acid reduction of (S)-2-acetolactate (S2AL) to yield (R)-2,3-dihydroxy-isovalerate. In the isomerase reaction, S2AL is rearranged via a Mg-dependent methyl migration to produce 3-hydroxy-3-methyl-2-ketobutyrate (HMKB). In the reductase reaction, this 2-ketoacid undergoes a metal-dependent reduction by NADPH to yield (R)-2,3-dihydroxy-isovalerate. This Pseudomonas putida (strain W619) protein is Ketol-acid reductoisomerase (NADP(+)).